The primary structure comprises 312 residues: uncharacterized protein (312 aa).

At 1–14 (MSIVETCISFVSTN) the chain is on the extracellular side. Residues 15 to 35 (PFYPFCTGLLLNCVVTPLYFW) form a helical membrane-spanning segment. Residues 36 to 41 (KTQNGR) lie on the Cytoplasmic side of the membrane. A helical membrane pass occupies residues 42-62 (IVVVSLLQFVVLYATAFISIG). Residues 63-179 (TDKSLYRNKW…LEYDQDTATE (117 aa)) lie on the Extracellular side of the membrane. One can recognise an FAD-binding FR-type domain in the interval 70 to 173 (NKWVALPLSK…KGPLGELEYD (104 aa)). A helical membrane pass occupies residues 180–200 (LGIIAGGSGITPVLQVLQEII). Residues 201 to 312 (PSPEDLTHIS…GNGTDKVFVF (112 aa)) lie on the Cytoplasmic side of the membrane.

This sequence belongs to the flavoprotein pyridine nucleotide cytochrome reductase family. It depends on FAD as a cofactor.

Its subcellular location is the membrane. This is an uncharacterized protein from Saccharomyces cerevisiae (strain ATCC 204508 / S288c) (Baker's yeast).